Reading from the N-terminus, the 362-residue chain is UDP-3-O-acylglucosamine N-acyltransferase (362 aa).

Residue His-251 is the Proton acceptor of the active site.

Belongs to the transferase hexapeptide repeat family. LpxD subfamily. As to quaternary structure, homotrimer.

The enzyme catalyses a UDP-3-O-[(3R)-3-hydroxyacyl]-alpha-D-glucosamine + a (3R)-hydroxyacyl-[ACP] = a UDP-2-N,3-O-bis[(3R)-3-hydroxyacyl]-alpha-D-glucosamine + holo-[ACP] + H(+). It participates in bacterial outer membrane biogenesis; LPS lipid A biosynthesis. Its function is as follows. Catalyzes the N-acylation of UDP-3-O-acylglucosamine using 3-hydroxyacyl-ACP as the acyl donor. Is involved in the biosynthesis of lipid A, a phosphorylated glycolipid that anchors the lipopolysaccharide to the outer membrane of the cell. This chain is UDP-3-O-acylglucosamine N-acyltransferase, found in Cupriavidus pinatubonensis (strain JMP 134 / LMG 1197) (Cupriavidus necator (strain JMP 134)).